The chain runs to 208 residues: Protein-L-isoaspartate O-methyltransferase (208 aa).

Residue S59 is part of the active site.

Belongs to the methyltransferase superfamily. L-isoaspartyl/D-aspartyl protein methyltransferase family.

It is found in the cytoplasm. The catalysed reaction is [protein]-L-isoaspartate + S-adenosyl-L-methionine = [protein]-L-isoaspartate alpha-methyl ester + S-adenosyl-L-homocysteine. In terms of biological role, catalyzes the methyl esterification of L-isoaspartyl residues in peptides and proteins that result from spontaneous decomposition of normal L-aspartyl and L-asparaginyl residues. It plays a role in the repair and/or degradation of damaged proteins. The protein is Protein-L-isoaspartate O-methyltransferase of Vibrio parahaemolyticus serotype O3:K6 (strain RIMD 2210633).